The following is a 208-amino-acid chain: ATP-dependent Clp protease proteolytic subunit (208 aa).

Residue Ser-107 is the Nucleophile of the active site. His-132 is a catalytic residue.

It belongs to the peptidase S14 family. As to quaternary structure, fourteen ClpP subunits assemble into 2 heptameric rings which stack back to back to give a disk-like structure with a central cavity, resembling the structure of eukaryotic proteasomes.

Its subcellular location is the cytoplasm. The enzyme catalyses Hydrolysis of proteins to small peptides in the presence of ATP and magnesium. alpha-casein is the usual test substrate. In the absence of ATP, only oligopeptides shorter than five residues are hydrolyzed (such as succinyl-Leu-Tyr-|-NHMec, and Leu-Tyr-Leu-|-Tyr-Trp, in which cleavage of the -Tyr-|-Leu- and -Tyr-|-Trp bonds also occurs).. In terms of biological role, cleaves peptides in various proteins in a process that requires ATP hydrolysis. Has a chymotrypsin-like activity. Plays a major role in the degradation of misfolded proteins. The polypeptide is ATP-dependent Clp protease proteolytic subunit (Jannaschia sp. (strain CCS1)).